We begin with the raw amino-acid sequence, 584 residues long: Sperm-associated microtubule inner protein 4 (584 aa).

The protein resides in the cytoplasm. Its subcellular location is the cytoskeleton. It localises to the microtubule organizing center. The protein localises to the centrosome. It is found in the flagellum axoneme. Its function is as follows. Microtubule inner protein (MIP) part of the dynein-decorated doublet microtubules (DMTs) in flagellum axoneme. May serve to reinforce and thus stabilize the microtubule structure in the sperm flagella. This chain is Sperm-associated microtubule inner protein 4 (SPMIP4), found in Bos taurus (Bovine).